The chain runs to 466 residues: Probable WRKY transcription factor 32 (466 aa).

Disordered stretches follow at residues 1–45 and 140–166; these read MEED…MEDL and SVPT…PRTP. Residues 8–38 show a composition bias toward basic and acidic residues; sequence DEAKTYTVEKSEKVEPEKDGLSQFRDEEKSL. A DNA-binding region (WRKY 1) is located at residues 162 to 226; sequence VPRTPARDGY…NKGLHTHEPP (65 aa). Residues C193, C198, H221, and H223 each coordinate Zn(2+). Positions 284-317 are disordered; sequence HCENEAVEEPEPKRRLKKDNSQSSDSVSKPGKKN. The segment at residues 325-390 is a DNA-binding region (WRKY 2); sequence GDVGICGDGY…YKGVHNHDMP (66 aa). The Zn(2+) site is built by C356, C361, H385, and H387. Residues 410–439 are disordered; it reads TSMRTRTDDQVNIPTSSQCSVGRESEKQSK. The span at 419–429 shows a compositional bias: polar residues; it reads QVNIPTSSQCS.

It belongs to the WRKY group I family.

It localises to the nucleus. In terms of biological role, transcription factor. Interacts specifically with the W box (5'-(T)TGAC[CT]-3'), a frequently occurring elicitor-responsive cis-acting element. This is Probable WRKY transcription factor 32 (WRKY32) from Arabidopsis thaliana (Mouse-ear cress).